A 2180-amino-acid chain; its full sequence is DNA polymerase epsilon catalytic subunit A (2180 aa).

The Zn(2+) site is built by Cys2067, Cys2070, Cys2089, and Cys2092. The segment at 2067-2092 adopts a CysA-type zinc-finger fold; it reads CENCAYFSDLDICMSDLRSMFKCSKC. Residues Cys2123, Cys2126, Cys2138, and Cys2140 each contribute to the [4Fe-4S] cluster site. A CysB motif motif is present at residues 2123 to 2140; that stretch reads CAKCRKIKSDTMSAYCTC.

It belongs to the DNA polymerase type-B family. In terms of assembly, heterotetramer. Consists of 4 subunits: POL2, DPB2, DPB3 and DPB4. [4Fe-4S] cluster is required as a cofactor.

The protein localises to the nucleus. It catalyses the reaction DNA(n) + a 2'-deoxyribonucleoside 5'-triphosphate = DNA(n+1) + diphosphate. DNA polymerase II participates in chromosomal DNA replication. The protein is DNA polymerase epsilon catalytic subunit A (POL2) of Eremothecium gossypii (strain ATCC 10895 / CBS 109.51 / FGSC 9923 / NRRL Y-1056) (Yeast).